A 397-amino-acid chain; its full sequence is Tryptophan synthase beta chain (397 aa).

Residue lysine 87 is modified to N6-(pyridoxal phosphate)lysine.

The protein belongs to the TrpB family. In terms of assembly, tetramer of two alpha and two beta chains. Pyridoxal 5'-phosphate is required as a cofactor.

It catalyses the reaction (1S,2R)-1-C-(indol-3-yl)glycerol 3-phosphate + L-serine = D-glyceraldehyde 3-phosphate + L-tryptophan + H2O. Its pathway is amino-acid biosynthesis; L-tryptophan biosynthesis; L-tryptophan from chorismate: step 5/5. Functionally, the beta subunit is responsible for the synthesis of L-tryptophan from indole and L-serine. The sequence is that of Tryptophan synthase beta chain from Escherichia coli O45:K1 (strain S88 / ExPEC).